A 1024-amino-acid chain; its full sequence is Myosin phosphatase Rho-interacting protein (1024 aa).

The interaction with F-actin stretch occupies residues 1-382; it reads MSAAKENPCR…DRRSTESSMT (382 aa). Positions 43 to 150 constitute a PH 1 domain; it reads KPIYGGWLLL…WLEMLMVYPR (108 aa). The interval 152–262 is disordered; that stretch reads NKQNQKKKRK…GDRVDGGRKV (111 aa). The span at 179–190 shows a compositional bias: low complexity; it reads SSSGGSSGSSSS. Phosphoserine occurs at positions 193, 219, 221, 225, and 227. Positions 221-233 are enriched in low complexity; it reads SPAQSPSQSQPPA. A compositionally biased stretch (basic and acidic residues) spans 240–262; the sequence is PGLESKEDESTISGDRVDGGRKV. S266, S270, S289, and S292 each carry phosphoserine. Disordered regions lie at residues 274–301 and 328–379; these read AKQD…SRRS and PSSD…STES. T295 bears the Phosphothreonine mark. Residues 333 to 349 show a composition bias toward basic and acidic residues; the sequence is RQGRSERRAIPRKRDFA. S364 is modified (phosphoserine). The PH 2 domain maps to 386-482; sequence LNFKKGWLTK…WIQTIMKHVL (97 aa). The tract at residues 486–583 is disordered; that stretch reads APDVTSSLPE…AEPGELERER (98 aa). Polar residues predominate over residues 488–508; it reads DVTSSLPEGKNKSTSFETCSR. At S492 the chain carries Phosphoserine. Basic and acidic residues predominate over residues 522 to 545; that stretch reads PEQKKSRARERRREGRSKTFDWAE. The tract at residues 545 to 823 is interaction with RHOA; that stretch reads EFRPIQQALA…SVQRELEVLS (279 aa). S617 carries the post-translational modification Phosphoserine. Position 645 is a phosphothreonine (T645). The stretch at 672–976 forms a coiled coil; that stretch reads HELTSLLEKE…AATEALGEKS (305 aa). S799 bears the Phosphoserine mark. The interaction with PPP1R12A stretch occupies residues 823–878; the sequence is SEQYSQKCLENAHLAQALEAERQALRQCQRENQELNAHNQELNNRLAAEITRLRTL. Residues 972 to 995 form a disordered region; sequence LGEKSPEGTTVSGYDIMKSKSNPD. A phosphoserine mark is found at S976, G979, S992, S1013, and S1015.

As to quaternary structure, binds RHOA, PPP1R12A/MBS and PPP1R12C/MBS85 through adjacent coiled coil domains. Interacts with MYZAP. Binds F-actin through its N-terminus. Expressed in Kidney, Brain, Heart and Lung.

Its subcellular location is the cytoplasm. It is found in the cytoskeleton. Functionally, targets myosin phosphatase to the actin cytoskeleton. Required for the regulation of the actin cytoskeleton by RhoA and ROCK1. Depletion leads to an increased number of stress fibers in smooth muscle cells through stabilization of actin fibers by phosphorylated myosin. Overexpression of MRIP as well as its F-actin-binding region leads to disassembly of stress fibers in neuronal cells. This chain is Myosin phosphatase Rho-interacting protein (Mprip), found in Mus musculus (Mouse).